The following is a 244-amino-acid chain: Ribonuclease PH (244 aa).

Phosphate is bound by residues Arg90 and 128–130 (GTR).

Belongs to the RNase PH family. As to quaternary structure, homohexameric ring arranged as a trimer of dimers.

The enzyme catalyses tRNA(n+1) + phosphate = tRNA(n) + a ribonucleoside 5'-diphosphate. Its function is as follows. Phosphorolytic 3'-5' exoribonuclease that plays an important role in tRNA 3'-end maturation. Removes nucleotide residues following the 3'-CCA terminus of tRNAs; can also add nucleotides to the ends of RNA molecules by using nucleoside diphosphates as substrates, but this may not be physiologically important. Probably plays a role in initiation of 16S rRNA degradation (leading to ribosome degradation) during starvation. The sequence is that of Ribonuclease PH from Prochlorococcus marinus (strain MIT 9313).